The sequence spans 326 residues: ATPase GET3 (326 aa).

32-39 (KGGVGKTT) is a binding site for ATP. D61 is a catalytic residue. 2 residues coordinate ATP: E244 and N271. 2 residues coordinate Zn(2+): C282 and C285.

Belongs to the arsA ATPase family. As to quaternary structure, homodimer.

Its subcellular location is the cytoplasm. The protein localises to the endoplasmic reticulum. ATPase required for the post-translational delivery of tail-anchored (TA) proteins to the endoplasmic reticulum. Recognizes and selectively binds the transmembrane domain of TA proteins in the cytosol. This complex then targets to the endoplasmic reticulum by membrane-bound receptors, where the tail-anchored protein is released for insertion. This process is regulated by ATP binding and hydrolysis. ATP binding drives the homodimer towards the closed dimer state, facilitating recognition of newly synthesized TA membrane proteins. ATP hydrolysis is required for insertion. Subsequently, the homodimer reverts towards the open dimer state, lowering its affinity for the membrane-bound receptor, and returning it to the cytosol to initiate a new round of targeting. This chain is ATPase GET3, found in Phaeosphaeria nodorum (strain SN15 / ATCC MYA-4574 / FGSC 10173) (Glume blotch fungus).